The primary structure comprises 482 residues: MVPAGDQAEEAIVADAGKEEAEVRAAMGVEQDGKFSMTSLLWHGGSVWDAWFSCASNQVAQVLLTLPYSFSQLGMLSGLLLQVFYGLMGSWTAYLISVLYVEYRARKEKEGVSFKNHVIQWFEVLDGLLGPYWKAAGLAFNCTFLLFGSVIQLIACASNIYYINDRLDKRTWTYIFGACCSTTVFIPSFHNYRIWSFLGLGMTTYTAWYLAIAAAVHGQVDGVTHSGPSKMVLYFTGATNILYTFGGHAVTVEIMHAMWKPQKFKYIYLVATLYVFTLTLPSASAMYWAFGDALLTHSNAFSLLPRSGWRDAAVILMLIHQFITFGFACTPLYFVWEKAIGMHGTRSVLTRALARLPIVVPIWFLAIIFPFFGPINSAVGALLVSFTVYIIPSLSHILTYRSASARLNAAEKPPPFLPSWSGMFVVNVFVVAWVLVVGFGLGGWASVTNFIKQIDTFGLFAKCYQCPPRAHAGAPLPAPPRH.

Over 1-58 (MVPAGDQAEEAIVADAGKEEAEVRAAMGVEQDGKFSMTSLLWHGGSVWDAWFSCASNQ) the chain is Cytoplasmic. A helical transmembrane segment spans residues 59–76 (VAQVLLTLPYSFSQLGML). Topologically, residues 77 to 78 (SG) are extracellular. A helical transmembrane segment spans residues 79 to 99 (LLLQVFYGLMGSWTAYLISVL). At 100 to 134 (YVEYRARKEKEGVSFKNHVIQWFEVLDGLLGPYWK) the chain is on the cytoplasmic side. Residues 135–155 (AAGLAFNCTFLLFGSVIQLIA) form a helical membrane-spanning segment. The Extracellular segment spans residues 156-171 (CASNIYYINDRLDKRT). A helical membrane pass occupies residues 172–192 (WTYIFGACCSTTVFIPSFHNY). Arg-193 is a topological domain (cytoplasmic). A helical membrane pass occupies residues 194 to 214 (IWSFLGLGMTTYTAWYLAIAA). The Extracellular portion of the chain corresponds to 215 to 231 (AVHGQVDGVTHSGPSKM). A helical transmembrane segment spans residues 232-252 (VLYFTGATNILYTFGGHAVTV). Residues 253–265 (EIMHAMWKPQKFK) lie on the Cytoplasmic side of the membrane. A helical membrane pass occupies residues 266 to 286 (YIYLVATLYVFTLTLPSASAM). At 287–313 (YWAFGDALLTHSNAFSLLPRSGWRDAA) the chain is on the extracellular side. Residues 314–334 (VILMLIHQFITFGFACTPLYF) traverse the membrane as a helical segment. Topologically, residues 335–355 (VWEKAIGMHGTRSVLTRALAR) are cytoplasmic. A helical membrane pass occupies residues 356–376 (LPIVVPIWFLAIIFPFFGPIN). Ser-377 is a topological domain (extracellular). The helical transmembrane segment at 378–398 (AVGALLVSFTVYIIPSLSHIL) threads the bilayer. Over 399–423 (TYRSASARLNAAEKPPPFLPSWSGM) the chain is Cytoplasmic. Residues 424-444 (FVVNVFVVAWVLVVGFGLGGW) form a helical membrane-spanning segment. Residues 445–482 (ASVTNFIKQIDTFGLFAKCYQCPPRAHAGAPLPAPPRH) are Extracellular-facing.

Belongs to the amino acid/polyamine transporter 2 family. Amino acid/auxin permease (AAAP) (TC 2.A.18.1) subfamily.

It is found in the cell membrane. Carrier protein involved in proton-driven auxin influx. May mediate the formation of auxin gradient from developing leaves (site of auxin biosynthesis) to tips. This Oryza sativa subsp. japonica (Rice) protein is Auxin transporter-like protein 2.